A 99-amino-acid chain; its full sequence is Nucleoid-associated protein MGAS2096_Spy1605 (99 aa).

It belongs to the YbaB/EbfC family. As to quaternary structure, homodimer.

The protein localises to the cytoplasm. The protein resides in the nucleoid. Binds to DNA and alters its conformation. May be involved in regulation of gene expression, nucleoid organization and DNA protection. The polypeptide is Nucleoid-associated protein MGAS2096_Spy1605 (Streptococcus pyogenes serotype M12 (strain MGAS2096)).